The primary structure comprises 295 residues: Acetyl-coenzyme A carboxylase carboxyl transferase subunit beta (295 aa).

Residues 1–20 (MSWLSKLMPSGIRTENTPAK) are disordered. The CoA carboxyltransferase N-terminal domain maps to 28 to 295 (LWEKCSNCGS…QPHPQDADAA (268 aa)). Zn(2+) contacts are provided by C32, C35, C51, and C54. Residues 32–54 (CSNCGSALYGPELEENLEVCPKC) form a C4-type zinc finger.

Belongs to the AccD/PCCB family. In terms of assembly, acetyl-CoA carboxylase is a heterohexamer composed of biotin carboxyl carrier protein (AccB), biotin carboxylase (AccC) and two subunits each of ACCase subunit alpha (AccA) and ACCase subunit beta (AccD). Zn(2+) is required as a cofactor.

It localises to the cytoplasm. It catalyses the reaction N(6)-carboxybiotinyl-L-lysyl-[protein] + acetyl-CoA = N(6)-biotinyl-L-lysyl-[protein] + malonyl-CoA. It functions in the pathway lipid metabolism; malonyl-CoA biosynthesis; malonyl-CoA from acetyl-CoA: step 1/1. In terms of biological role, component of the acetyl coenzyme A carboxylase (ACC) complex. Biotin carboxylase (BC) catalyzes the carboxylation of biotin on its carrier protein (BCCP) and then the CO(2) group is transferred by the transcarboxylase to acetyl-CoA to form malonyl-CoA. This Xanthomonas campestris pv. campestris (strain 8004) protein is Acetyl-coenzyme A carboxylase carboxyl transferase subunit beta.